Consider the following 676-residue polypeptide: GRB2-associated-binding protein 2 (676 aa).

Serine 2 carries the post-translational modification Phosphoserine. The region spanning 6 to 117 (DVVCTGWLRK…WVQSICQICG (112 aa)) is the PH domain. The interval 127 to 178 (SLRNVSSAGHGPRSSPAELSSSSQHLLRERKSSAPSHSSQPTLFTFEPPVSN) is disordered. Serine 133, serine 140, serine 141, serine 148, serine 149, serine 159, serine 164, serine 210, serine 218, serine 223, and serine 264 each carry phosphoserine. A compositionally biased stretch (low complexity) spans 140-149 (SSPAELSSSS). The segment covering 159 to 169 (SAPSHSSQPTL) has biased composition (polar residues). The residue at position 265 (threonine 265) is a Phosphothreonine. Phosphotyrosine is present on tyrosine 266. Threonine 278 carries the post-translational modification Phosphothreonine. Phosphoserine occurs at positions 281 and 285. Phosphothreonine is present on threonine 287. At tyrosine 293 the chain carries Phosphotyrosine. The residue at position 331 (threonine 331) is a Phosphothreonine. The tract at residues 341-430 (VATPGDSAIA…RSAESMSDGV (90 aa)) is disordered. The SH3-binding motif lies at 351–358 (PPPRPPKP). Serine 368 is subject to Phosphoserine. Phosphothreonine occurs at positions 385 and 391. The residue at position 405 (serine 405) is a Phosphoserine. Residue threonine 408 is modified to Phosphothreonine. Phosphoserine occurs at positions 422 and 425. Tyrosine 452 carries the phosphotyrosine modification. Serine 480 carries the post-translational modification Phosphoserine. The tract at residues 492-531 (PSTTLPVHRGPSRGSEIQPPPVNRNLKPDRKAKPTPLDLR) is disordered. Positions 510-519 (PPPVNRNLKP) match the SH3-binding motif. Serine 543 is modified (phosphoserine). Composition is skewed to polar residues over residues 556 to 577 (FNSSSSQYCRPISTQSITSTDS) and 589 to 611 (NPVSASPVPSGTNSPAPKKSTGS). Disordered stretches follow at residues 556-643 (FNSS…KVDY) and 656-676 (NTMQEWTDVRQSSEPSKGAKL). 2 positions are modified to phosphoserine: serine 622 and serine 623. Residue tyrosine 643 is modified to Phosphotyrosine. Residues 656 to 670 (NTMQEWTDVRQSSEP) show a composition bias toward polar residues.

The protein belongs to the GAB family. As to quaternary structure, part of a complex composed of EEIG1, TNFRSF11A/RANK, PLCG2, GAB2, TEC and BTK; complex formation increases in the presence of TNFSF11/RANKL. Interacts with SHC1; may mediate interaction with receptors. Interacts with SYK. Interacts with PI-3 kinase. Interacts with GRB2 (via SH3 2 domain). Interacts (phosphorylated) with PTPN11. Interacts with TNFRSF11A (via cytoplasmic domain). Interacts (phosphorylated) with 14-3-3 family proteins SFN, YWHAB, YWHAE, YWHAG, YWHAH, YWHAQ and YWHAZ; prevents interaction with GRB2 and attenuates GAB2 signaling. Interacts with HCK. In terms of processing, phosphorylated on tyrosine residue(s) by the thrombopoietin receptor (TPOR), stem cell factor receptor (SCFR), and T-cell and B-cell antigen receptors, gp130, IL-2R and IL-3R. Phosphorylated upon stimulation of TNFRSF11A/RANK by TNFSF11/RANKL. Phosphorylated upon EGF stimulation. Phosphorylated on tyrosine residues by HCK upon IL6 signaling. Dephosphorylated by PTPN11.

It is found in the cytoplasm. The protein resides in the cell membrane. Its subcellular location is the membrane raft. Adapter protein which acts downstream of several membrane receptors including cytokine, antigen, hormone, cell matrix and growth factor receptors to regulate multiple signaling pathways. Regulates osteoclast differentiation mediating the TNFRSF11A/RANK signaling. In allergic response, it plays a role in mast cells activation and degranulation through PI-3-kinase regulation. Also involved in the regulation of cell proliferation and hematopoiesis. This chain is GRB2-associated-binding protein 2 (GAB2), found in Homo sapiens (Human).